We begin with the raw amino-acid sequence, 191 residues long: ATP-dependent Clp protease proteolytic subunit 1 (191 aa).

Residue serine 91 is the Nucleophile of the active site. Histidine 116 is an active-site residue.

This sequence belongs to the peptidase S14 family. As to quaternary structure, fourteen ClpP subunits assemble into 2 heptameric rings which stack back to back to give a disk-like structure with a central cavity, resembling the structure of eukaryotic proteasomes.

Its subcellular location is the cytoplasm. The enzyme catalyses Hydrolysis of proteins to small peptides in the presence of ATP and magnesium. alpha-casein is the usual test substrate. In the absence of ATP, only oligopeptides shorter than five residues are hydrolyzed (such as succinyl-Leu-Tyr-|-NHMec, and Leu-Tyr-Leu-|-Tyr-Trp, in which cleavage of the -Tyr-|-Leu- and -Tyr-|-Trp bonds also occurs).. Functionally, cleaves peptides in various proteins in a process that requires ATP hydrolysis. Has a chymotrypsin-like activity. Plays a major role in the degradation of misfolded proteins. The polypeptide is ATP-dependent Clp protease proteolytic subunit 1 (Chlamydia pneumoniae (Chlamydophila pneumoniae)).